Here is a 401-residue protein sequence, read N- to C-terminus: Elongation factor Tu, apicoplast (401 aa).

The tr-type G domain maps to 10 to 206 (KPHINIGTIG…ALDSYIPLPK (197 aa)). A G1 region spans residues 19 to 26 (GHVDHGKT). 19 to 26 (GHVDHGKT) provides a ligand contact to GTP. Threonine 26 lines the Mg(2+) pocket. The G2 stretch occupies residues 60 to 64 (GITIK). Residues 81-84 (DCPG) are G3. GTP is bound by residues 81–85 (DCPGH) and 136–139 (NKID). The interval 136–139 (NKID) is G4. The segment at 173–175 (SAL) is G5.

This sequence belongs to the TRAFAC class translation factor GTPase superfamily. Classic translation factor GTPase family. EF-Tu/EF-1A subfamily. Monomer.

It is found in the plastid. Its subcellular location is the apicoplast. It catalyses the reaction GTP + H2O = GDP + phosphate + H(+). Functionally, GTP hydrolase that promotes the GTP-dependent binding of aminoacyl-tRNA to the A-site of ribosomes during protein biosynthesis. The chain is Elongation factor Tu, apicoplast (tufA) from Toxoplasma gondii.